The following is a 390-amino-acid chain: Na(+)/H(+) antiporter NhaA (390 aa).

12 helical membrane passes run 14–34, 61–81, 97–117, 126–146, 156–176, 181–201, 221–241, 256–276, 280–300, 305–325, 330–350, and 362–382; these read AAGG…ANLN, MLLW…GLEV, SLPV…YLAF, AGWA…LALL, VFLM…IALF, LSMV…VLNL, VLKS…FVPL, ALHP…NAGV, GVTL…GLFI, GISL…PPGV, ILAV…IASL, and WAKL…YALL.

This sequence belongs to the NhaA Na(+)/H(+) (TC 2.A.33) antiporter family.

It is found in the cell inner membrane. The catalysed reaction is Na(+)(in) + 2 H(+)(out) = Na(+)(out) + 2 H(+)(in). Its function is as follows. Na(+)/H(+) antiporter that extrudes sodium in exchange for external protons. The polypeptide is Na(+)/H(+) antiporter NhaA (Cronobacter sakazakii (strain ATCC BAA-894) (Enterobacter sakazakii)).